A 949-amino-acid chain; its full sequence is Glutamate receptor ionotropic, kainate 1 (949 aa).

The signal sequence occupies residues 1 to 30 (MERSTVLIQPGLWTRDTSWTLLYFLCYILP). At 31-576 (QTSPQVLRIG…VFSFLNPLSP (546 aa)) the chain is on the extracellular side. Residues Asn68, Asn74, Asn276, Asn379, Asn428, Asn439, and Asn446 are each glycosylated (N-linked (GlcNAc...) asparagine). L-glutamate is bound by residues Pro531, Thr533, and Arg538. N-linked (GlcNAc...) asparagine glycosylation occurs at Asn561. A helical membrane pass occupies residues 577-597 (DIWMYVLLACLGVSCVLFVIA). Over 598-653 (RFTPYEWYNPHPCNPDSDVVENNFTLLNSFWFGVGALMQQGSELMPKALSTRIVGG) the chain is Cytoplasmic. A helical transmembrane segment spans residues 654–674 (IWWFFTLIIISSYTANLAAFL). Topologically, residues 675–834 (TVERMESPID…KEASALGVEN (160 aa)) are extracellular. Positions 704 and 705 each coordinate L-glutamate. A Phosphoserine; by PKC modification is found at Ser725. An L-glutamate-binding site is contributed by Glu753. Thr761 carries the post-translational modification Phosphothreonine; by PKC. Cysteines 765 and 819 form a disulfide. Asn766 is a glycosylation site (N-linked (GlcNAc...) asparagine). The chain crosses the membrane as a helical span at residues 835–855 (IGGIFIVLAAGLVLSVFVAIG). Residues 856–949 (EFLYKSRKNN…RRTQRKETVA (94 aa)) lie on the Cytoplasmic side of the membrane.

The protein belongs to the glutamate-gated ion channel (TC 1.A.10.1) family. GRIK1 subfamily. Homotetramer or heterotetramer of pore-forming glutamate receptor subunits. Tetramers may be formed by the dimerization of dimers. Can form functional heteromeric receptors with GRIK4 and GRIK5. Interacts with KLHL17. As to expression, expressed in the olfactory bulb (at protein level). Expressed in subsets of neurons throughout the developing and adult central and peripheral nervous systems. In the CNS principally in the medial amygdaloid nuclei, medial habenulae, pyriform and cingulate cortices, and Purkinje cell layer. Also highly expressed in embryonic and adult dorsal root ganglia. Expressed at high levels in the trigeminal ganglion neurons.

The protein localises to the cell membrane. It is found in the postsynaptic cell membrane. The catalysed reaction is Ca(2+)(in) = Ca(2+)(out). Its function is as follows. Ionotropic glutamate receptor that functions as a cation-permeable ligand-gated ion channel, gated by L-glutamate and the glutamatergic agonist kainic acid. L-glutamate acts as an excitatory neurotransmitter at many synapses in the central nervous system. Binding of the excitatory neurotransmitter L-glutamate induces a conformation change, leading to the opening of the cation channel, and thereby converts the chemical signal to an electrical impulse. The receptor then desensitizes rapidly and enters a transient inactive state, characterized by the presence of bound agonist. The chain is Glutamate receptor ionotropic, kainate 1 (Grik1) from Rattus norvegicus (Rat).